The chain runs to 456 residues: Bis(5'-adenosyl)-triphosphatase enpp4 (456 aa).

A signal peptide spans 1–18 (MFNMKILVIPLFWGLVTG). At 19–410 (YKGNSSDSSA…DQWCINLPEA (392 aa)) the chain is on the extracellular side. Zn(2+)-binding residues include D37 and T73. T73 (AMP-threonine intermediate) is an active-site residue. Position 94 (N94) interacts with substrate. The N-linked (GlcNAc...) asparagine glycan is linked to N148. Y157 provides a ligand contact to substrate. Residue N169 is glycosylated (N-linked (GlcNAc...) asparagine). 4 residues coordinate Zn(2+): D192, H196, D240, and H241. D192 lines the substrate pocket. Residues C257 and C290 are joined by a disulfide bond. N279 and N330 each carry an N-linked (GlcNAc...) asparagine glycan. Residue H339 participates in Zn(2+) binding. N389 carries an N-linked (GlcNAc...) asparagine glycan. A disulfide bridge connects residues C397 and C404. The helical transmembrane segment at 411–431 (IGIVVSALLVLTMLTGLMIFM) threads the bilayer. At 432-456 (RSRASTSRPFSRLQLQEDDDDPLID) the chain is on the cytoplasmic side.

This sequence belongs to the nucleotide pyrophosphatase/phosphodiesterase family. It depends on Zn(2+) as a cofactor.

Its subcellular location is the cell membrane. The catalysed reaction is P(1),P(3)-bis(5'-adenosyl) triphosphate + H2O = AMP + ADP + 2 H(+). Functionally, hydrolyzes extracellular Ap3A into AMP and ADP, and Ap4A into AMP and ATP. Ap3A and Ap4A are diadenosine polyphosphates thought to induce proliferation of vascular smooth muscle cells. Acts as a procoagulant, mediating platelet aggregation at the site of nascent thrombus via release of ADP from Ap3A and activation of ADP receptors. This is Bis(5'-adenosyl)-triphosphatase enpp4 (Enpp4) from Mus musculus (Mouse).